Consider the following 307-residue polypeptide: 4-hydroxy-3-methylbut-2-enyl diphosphate reductase (307 aa).

C13 contributes to the [4Fe-4S] cluster binding site. H42 and H75 together coordinate (2E)-4-hydroxy-3-methylbut-2-enyl diphosphate. Dimethylallyl diphosphate is bound by residues H42 and H75. Isopentenyl diphosphate is bound by residues H42 and H75. Position 97 (C97) interacts with [4Fe-4S] cluster. H125 serves as a coordination point for (2E)-4-hydroxy-3-methylbut-2-enyl diphosphate. H125 contributes to the dimethylallyl diphosphate binding site. H125 contributes to the isopentenyl diphosphate binding site. E127 (proton donor) is an active-site residue. T165 provides a ligand contact to (2E)-4-hydroxy-3-methylbut-2-enyl diphosphate. C195 serves as a coordination point for [4Fe-4S] cluster. S223, S224, N225, and S267 together coordinate (2E)-4-hydroxy-3-methylbut-2-enyl diphosphate. Dimethylallyl diphosphate is bound by residues S223, S224, N225, and S267. 4 residues coordinate isopentenyl diphosphate: S223, S224, N225, and S267.

It belongs to the IspH family. Requires [4Fe-4S] cluster as cofactor.

The enzyme catalyses isopentenyl diphosphate + 2 oxidized [2Fe-2S]-[ferredoxin] + H2O = (2E)-4-hydroxy-3-methylbut-2-enyl diphosphate + 2 reduced [2Fe-2S]-[ferredoxin] + 2 H(+). The catalysed reaction is dimethylallyl diphosphate + 2 oxidized [2Fe-2S]-[ferredoxin] + H2O = (2E)-4-hydroxy-3-methylbut-2-enyl diphosphate + 2 reduced [2Fe-2S]-[ferredoxin] + 2 H(+). It participates in isoprenoid biosynthesis; dimethylallyl diphosphate biosynthesis; dimethylallyl diphosphate from (2E)-4-hydroxy-3-methylbutenyl diphosphate: step 1/1. Its pathway is isoprenoid biosynthesis; isopentenyl diphosphate biosynthesis via DXP pathway; isopentenyl diphosphate from 1-deoxy-D-xylulose 5-phosphate: step 6/6. In terms of biological role, catalyzes the conversion of 1-hydroxy-2-methyl-2-(E)-butenyl 4-diphosphate (HMBPP) into a mixture of isopentenyl diphosphate (IPP) and dimethylallyl diphosphate (DMAPP). Acts in the terminal step of the DOXP/MEP pathway for isoprenoid precursor biosynthesis. This is 4-hydroxy-3-methylbut-2-enyl diphosphate reductase from Chlamydia trachomatis serovar L2b (strain UCH-1/proctitis).